A 93-amino-acid polypeptide reads, in one-letter code: Late embryogenesis abundant protein B19.1A (93 aa).

Residues 1 to 93 (MASGQQERSQ…IDESKFKTKS (93 aa)) are disordered. Basic and acidic residues-rich tracts occupy residues 9–19 (SQLDRKAREGE) and 73–93 (GGER…KTKS).

The protein belongs to the small hydrophilic plant seed protein family. In terms of tissue distribution, embryos and young seedlings.

Lea proteins are late embryonic proteins abundant in higher plant seed embryos. It may have a role in desiccation tolerance by acting as an osmoprotective protein or as a desiccation-damage repair protein. The chain is Late embryogenesis abundant protein B19.1A (B19.1A) from Hordeum vulgare (Barley).